Consider the following 636-residue polypeptide: Outer spore wall assembly protein SHE10 (636 aa).

A signal peptide spans 1 to 23 (MRLVSKLLKALLVLLLAFGSVRY). Coiled-coil stretches lie at residues 433-460 (RAHL…LFEE) and 551-584 (KANL…TEFE). Positions 565-607 (QQREKEKAESASMKASTEFELSSSSFSSSSPSTASSCTASSTS) are disordered. Low complexity predominate over residues 579-607 (ASTEFELSSSSFSSSSPSTASSCTASSTS).

The protein belongs to the SHE10 family. As to quaternary structure, component of the mitochondria-localized RNase mitochondrial RNA-processing (RNase MRP) composed of one single RNA encoded by the NME1 gene and at least 31 proteins. Absent in the nucleus-localized RNase MRP (NuMRP).

It is found in the mitochondrion. In terms of biological role, involved in spore wall assembly. May be a component of the mitochondrial RNase MRP (MtMRP), a ribonucleoprotein endoribonuclease involved in the cleaving RNA transcripts to generate primers for DNA replication in mitochondria. The protein is Outer spore wall assembly protein SHE10 of Kluyveromyces lactis (strain ATCC 8585 / CBS 2359 / DSM 70799 / NBRC 1267 / NRRL Y-1140 / WM37) (Yeast).